The primary structure comprises 459 residues: Bifunctional protein GlmU (459 aa).

Residues 1-229 are pyrophosphorylase; sequence MSNFAIILAA…FDESLGVNDR (229 aa). Residues 8 to 11, Lys-22, Gln-72, and 77 to 78 each bind UDP-N-acetyl-alpha-D-glucosamine; these read LAAG and GT. Asp-102 serves as a coordination point for Mg(2+). UDP-N-acetyl-alpha-D-glucosamine-binding residues include Gly-139, Glu-154, Asn-169, and Asn-227. Position 227 (Asn-227) interacts with Mg(2+). The linker stretch occupies residues 230 to 250; it reads VALATAESVMRRRINHKHMVN. The interval 251-459 is N-acetyltransferase; the sequence is GVSFVNPEAT…TRLPHHPKNQ (209 aa). The UDP-N-acetyl-alpha-D-glucosamine site is built by Arg-332 and Lys-350. The active-site Proton acceptor is His-362. Residues Tyr-365 and Asn-376 each contribute to the UDP-N-acetyl-alpha-D-glucosamine site. Residues Ala-379, 385-386, Ser-404, Ala-422, and Arg-439 contribute to the acetyl-CoA site; that span reads NY.

It in the N-terminal section; belongs to the N-acetylglucosamine-1-phosphate uridyltransferase family. This sequence in the C-terminal section; belongs to the transferase hexapeptide repeat family. In terms of assembly, homotrimer. It depends on Mg(2+) as a cofactor.

It is found in the cytoplasm. The enzyme catalyses alpha-D-glucosamine 1-phosphate + acetyl-CoA = N-acetyl-alpha-D-glucosamine 1-phosphate + CoA + H(+). It catalyses the reaction N-acetyl-alpha-D-glucosamine 1-phosphate + UTP + H(+) = UDP-N-acetyl-alpha-D-glucosamine + diphosphate. It functions in the pathway nucleotide-sugar biosynthesis; UDP-N-acetyl-alpha-D-glucosamine biosynthesis; N-acetyl-alpha-D-glucosamine 1-phosphate from alpha-D-glucosamine 6-phosphate (route II): step 2/2. It participates in nucleotide-sugar biosynthesis; UDP-N-acetyl-alpha-D-glucosamine biosynthesis; UDP-N-acetyl-alpha-D-glucosamine from N-acetyl-alpha-D-glucosamine 1-phosphate: step 1/1. Its pathway is bacterial outer membrane biogenesis; LPS lipid A biosynthesis. Functionally, catalyzes the last two sequential reactions in the de novo biosynthetic pathway for UDP-N-acetylglucosamine (UDP-GlcNAc). The C-terminal domain catalyzes the transfer of acetyl group from acetyl coenzyme A to glucosamine-1-phosphate (GlcN-1-P) to produce N-acetylglucosamine-1-phosphate (GlcNAc-1-P), which is converted into UDP-GlcNAc by the transfer of uridine 5-monophosphate (from uridine 5-triphosphate), a reaction catalyzed by the N-terminal domain. This chain is Bifunctional protein GlmU, found in Streptococcus pneumoniae (strain Hungary19A-6).